We begin with the raw amino-acid sequence, 98 residues long: Large ribosomal subunit protein uL23 (98 aa).

This sequence belongs to the universal ribosomal protein uL23 family. In terms of assembly, part of the 50S ribosomal subunit. Contacts protein L29, and trigger factor when it is bound to the ribosome.

Functionally, one of the early assembly proteins it binds 23S rRNA. One of the proteins that surrounds the polypeptide exit tunnel on the outside of the ribosome. Forms the main docking site for trigger factor binding to the ribosome. This chain is Large ribosomal subunit protein uL23, found in Streptococcus sanguinis (strain SK36).